Consider the following 201-residue polypeptide: MGNIILLTGFQPFLDYSINPTEAIVKELNGRKIGEYEVRGVILPVSFRESGDLLLHHFQTVQPTAVFMLGLAAGRGKITPERVAININSGPEDRDGIAPVDEPIRQGGPAAYFSTLPVRRLIQRLNEEGFPAEMSNSAGTYVCNHVMYRMLDYLHEKGSEQVAAGFVHLPASKELAAQHHSLPSMDLKDLTRAVTLMIEEL.

Active-site residues include E81, C143, and H168.

The protein belongs to the peptidase C15 family. As to quaternary structure, homotetramer.

It is found in the cytoplasm. The catalysed reaction is Release of an N-terminal pyroglutamyl group from a polypeptide, the second amino acid generally not being Pro.. Its function is as follows. Removes 5-oxoproline from various penultimate amino acid residues except L-proline. The polypeptide is Pyrrolidone-carboxylate peptidase (pcp) (Halalkalibacterium halodurans (strain ATCC BAA-125 / DSM 18197 / FERM 7344 / JCM 9153 / C-125) (Bacillus halodurans)).